Reading from the N-terminus, the 489-residue chain is MSFNTGTAYAESDADDEYERDIHDSSPIDATDAEASPTESDPPSNEHTPTTYGYRSSADRLPETIISEWTADECADFIATIGLEQYSTRFVENEIVGEALVALLHDDLKSMGIHSVGHRLTILRSVYDVKKAQDVPVESDHYVPLTAENEGQYATAKDIKNLVEQLRLRDERMHLFEQDFRRLAEDFRRLREDMLPALRLAKDAQQPLPHLNNGSAYAGYDTTISPPAPTPSTSGQSGGGLKRQWSTKKIMLGTTPKATSPTHLQTAHDRSLAEQTLDPSSAAERAVMSSSHLAINGLVPSATSPSYPSINIPSPTSPPNTLGGATLASRSYRSDQPTPSSRSTFAESDYAHPGGRDKQPVAPRRMQTPAPDTPSGSNASVEIFKSFRVSMDDPCYKVLPAALKKYQINAPWDQYALYIVYGDQERCLGLEEKPLILFKQLDKEGKKPMFMLRKTNNAQVDIGNEAPGSAGLGSARGAATGYDPPGGII.

The disordered stretch occupies residues 1–56 (MSFNTGTAYAESDADDEYERDIHDSSPIDATDAEASPTESDPPSNEHTPTTYGYRS). Over residues 37–54 (PTESDPPSNEHTPTTYGY) the composition is skewed to polar residues. Positions 69–132 (WTADECADFI…LRSVYDVKKA (64 aa)) constitute an SAM domain. 2 disordered regions span residues 207-285 (PLPH…AAER) and 309-379 (SINI…GSNA). Composition is skewed to polar residues over residues 256–265 (PKATSPTHLQ) and 328–346 (ASRS…STFA). The 81-residue stretch at 377-457 (SNASVEIFKS…PMFMLRKTNN (81 aa)) folds into the Ras-associating domain.

As to quaternary structure, interacts with MST7 and MST11. Interacts with MCK1, MKK2 and HIK1.

Mitogen-activated protein kinase adapter protein; part of the MST11-MST7-PMK1 MAP kinase (MAPK) cascade that is essential for appressorium formation, penetration and invasive growth. Binds to the MAPKKK MST11 and the MAPKK MST7 to maintain the stability of the MST11-MST7 complex for the phosphorylation of the MAPK PMK1. Is also involved in the MPS1 and OSM1 MAPK pathways, and especially plays a role in the activation of MPS1 in response to cell wall stress. Its function differs in the 3 MAPK pathways. The chain is Mitogen-activated protein kinase adapter protein MST50 from Pyricularia oryzae (strain 70-15 / ATCC MYA-4617 / FGSC 8958) (Rice blast fungus).